We begin with the raw amino-acid sequence, 385 residues long: S-adenosylmethionine synthase (385 aa).

Position 15 (H15) interacts with ATP. D17 lines the Mg(2+) pocket. Residue E43 participates in K(+) binding. Positions 56 and 99 each coordinate L-methionine. Residues 99 to 109 are flexible loop; sequence QSPEIAQGVDE. Residues 164–166, 230–231, D239, 245–246, A262, and K266 each bind ATP; these read DAK, RF, and RK. D239 is an L-methionine binding site. K270 serves as a coordination point for L-methionine.

It belongs to the AdoMet synthase family. As to quaternary structure, homotetramer; dimer of dimers. Mg(2+) is required as a cofactor. Requires K(+) as cofactor.

The protein localises to the cytoplasm. The catalysed reaction is L-methionine + ATP + H2O = S-adenosyl-L-methionine + phosphate + diphosphate. It participates in amino-acid biosynthesis; S-adenosyl-L-methionine biosynthesis; S-adenosyl-L-methionine from L-methionine: step 1/1. Catalyzes the formation of S-adenosylmethionine (AdoMet) from methionine and ATP. The overall synthetic reaction is composed of two sequential steps, AdoMet formation and the subsequent tripolyphosphate hydrolysis which occurs prior to release of AdoMet from the enzyme. In Hydrogenovibrio crunogenus (strain DSM 25203 / XCL-2) (Thiomicrospira crunogena), this protein is S-adenosylmethionine synthase.